Reading from the N-terminus, the 191-residue chain is dCTP deaminase, dUMP-forming (191 aa).

DCTP-binding positions include K101–R106, D119, T127–E129, Q148, Y162, and Q174. Residue E129 is the Proton donor/acceptor of the active site. The segment at G163 to I191 is disordered. Polar residues predominate over residues Y171–I191.

The protein belongs to the dCTP deaminase family. As to quaternary structure, homotrimer.

The catalysed reaction is dCTP + 2 H2O = dUMP + NH4(+) + diphosphate. It functions in the pathway pyrimidine metabolism; dUMP biosynthesis; dUMP from dCTP: step 1/1. Its function is as follows. Bifunctional enzyme that catalyzes both the deamination of dCTP to dUTP and the hydrolysis of dUTP to dUMP without releasing the toxic dUTP intermediate. The sequence is that of dCTP deaminase, dUMP-forming from Nocardioides sp. (strain ATCC BAA-499 / JS614).